We begin with the raw amino-acid sequence, 311 residues long: Malate dehydrogenase (311 aa).

NAD(+)-binding positions include 7–13 (GAAGGIG) and D34. The substrate site is built by R81 and R87. NAD(+)-binding positions include N94 and 117 to 119 (ITN). Substrate is bound by residues N119 and R153. The Proton acceptor role is filled by H177. Position 227 (M227) interacts with NAD(+).

The protein belongs to the LDH/MDH superfamily. MDH type 1 family. Homodimer.

The catalysed reaction is (S)-malate + NAD(+) = oxaloacetate + NADH + H(+). In terms of biological role, catalyzes the reversible oxidation of malate to oxaloacetate. This is Malate dehydrogenase from Haemophilus influenzae (strain PittEE).